Consider the following 95-residue polypeptide: Large ribosomal subunit protein bL25 (95 aa).

The protein belongs to the bacterial ribosomal protein bL25 family. As to quaternary structure, part of the 50S ribosomal subunit; part of the 5S rRNA/L5/L18/L25 subcomplex. Contacts the 5S rRNA. Binds to the 5S rRNA independently of L5 and L18.

In terms of biological role, this is one of the proteins that binds to the 5S RNA in the ribosome where it forms part of the central protuberance. The sequence is that of Large ribosomal subunit protein bL25 from Shewanella piezotolerans (strain WP3 / JCM 13877).